The chain runs to 325 residues: MATH domain and coiled-coil domain-containing protein At3g58430 (325 aa).

The MATH domain maps to 6–131 (HKKFCWIIKN…KGDFKIIAEV (126 aa)). Residues 258-306 (FKVDWLEKKLDQVKDKKEREQSGLARLHELEEYLLKLKQKCSNLDLLVE) adopt a coiled-coil conformation.

In Arabidopsis thaliana (Mouse-ear cress), this protein is MATH domain and coiled-coil domain-containing protein At3g58430.